A 321-amino-acid polypeptide reads, in one-letter code: Non-canonical heme oxygenase HOZ, chloroplastic (321 aa).

Residues 1–45 constitute a chloroplast transit peptide; the sequence is MKSLVAHFSTPLITARLVPRCIIHRASISAVSFSTVRRRFSPLTM. The interval 96 to 116 is dimerization; the sequence is CGMLSTFSQKYEGYPSGSMVD. Ser-130, Val-134, and His-135 together coordinate heme b. 2 dimerization regions span residues 144–166 and 205–208; these read KCSLLIARDPEDRTGLRITLHGD and KVVR.

Homodimer. Binds to heme in the interdimer interface; the heme iron is coordinated by a fixed water molecule.

It localises to the plastid. Its subcellular location is the chloroplast. Dimeric beta-barrel protein binding to heme and catalyzing its degradation to produce biliverdin. May function in the tetrapyrrole biosynthetic pathway. This chain is Non-canonical heme oxygenase HOZ, chloroplastic, found in Arabidopsis thaliana (Mouse-ear cress).